The chain runs to 307 residues: Thioredoxin reductase (307 aa).

34–41 contacts FAD; that stretch reads ESKAHGGQ. A disulfide bridge links Cys134 with Cys137. Position 275-284 (275-284) interacts with FAD; that stretch reads DVRAKSFRQV.

Belongs to the class-II pyridine nucleotide-disulfide oxidoreductase family. In terms of assembly, homodimer. Requires FAD as cofactor.

Its subcellular location is the cytoplasm. The enzyme catalyses [thioredoxin]-dithiol + NADP(+) = [thioredoxin]-disulfide + NADPH + H(+). In Treponema pallidum (strain Nichols), this protein is Thioredoxin reductase (trxB).